We begin with the raw amino-acid sequence, 132 residues long: UPF0332 protein TM_1000 (132 aa).

Belongs to the UPF0332 family.

The chain is UPF0332 protein TM_1000 from Thermotoga maritima (strain ATCC 43589 / DSM 3109 / JCM 10099 / NBRC 100826 / MSB8).